The sequence spans 379 residues: UDP-N-acetylglucosamine--N-acetylmuramyl-(pentapeptide) pyrophosphoryl-undecaprenol N-acetylglucosamine transferase (379 aa).

Residues 17-19 (TGG), N128, R169, S197, and Q298 each bind UDP-N-acetyl-alpha-D-glucosamine.

The protein belongs to the glycosyltransferase 28 family. MurG subfamily.

The protein localises to the cell inner membrane. The catalysed reaction is di-trans,octa-cis-undecaprenyl diphospho-N-acetyl-alpha-D-muramoyl-L-alanyl-D-glutamyl-meso-2,6-diaminopimeloyl-D-alanyl-D-alanine + UDP-N-acetyl-alpha-D-glucosamine = di-trans,octa-cis-undecaprenyl diphospho-[N-acetyl-alpha-D-glucosaminyl-(1-&gt;4)]-N-acetyl-alpha-D-muramoyl-L-alanyl-D-glutamyl-meso-2,6-diaminopimeloyl-D-alanyl-D-alanine + UDP + H(+). It participates in cell wall biogenesis; peptidoglycan biosynthesis. In terms of biological role, cell wall formation. Catalyzes the transfer of a GlcNAc subunit on undecaprenyl-pyrophosphoryl-MurNAc-pentapeptide (lipid intermediate I) to form undecaprenyl-pyrophosphoryl-MurNAc-(pentapeptide)GlcNAc (lipid intermediate II). The sequence is that of UDP-N-acetylglucosamine--N-acetylmuramyl-(pentapeptide) pyrophosphoryl-undecaprenol N-acetylglucosamine transferase from Brucella suis (strain ATCC 23445 / NCTC 10510).